We begin with the raw amino-acid sequence, 201 residues long: LexA repressor (201 aa).

The segment at residues 28–48 (LREIGGHLGINGTLGVMKHLD) is a DNA-binding region (H-T-H motif). Catalysis depends on for autocatalytic cleavage activity residues serine 120 and lysine 157.

It belongs to the peptidase S24 family. In terms of assembly, homodimer.

The catalysed reaction is Hydrolysis of Ala-|-Gly bond in repressor LexA.. Its function is as follows. Represses a number of genes involved in the response to DNA damage (SOS response), including recA and lexA. In the presence of single-stranded DNA, RecA interacts with LexA causing an autocatalytic cleavage which disrupts the DNA-binding part of LexA, leading to derepression of the SOS regulon and eventually DNA repair. The chain is LexA repressor from Geotalea uraniireducens (strain Rf4) (Geobacter uraniireducens).